Consider the following 185-residue polypeptide: Protein GrpE (185 aa).

Over residues 1 to 20 (MSQEKKEELQSEAQVTKEET) the composition is skewed to basic and acidic residues. A disordered region spans residues 1 to 28 (MSQEKKEELQSEAQVTKEETPQANEAAA).

It belongs to the GrpE family. In terms of assembly, homodimer.

The protein resides in the cytoplasm. Participates actively in the response to hyperosmotic and heat shock by preventing the aggregation of stress-denatured proteins, in association with DnaK and GrpE. It is the nucleotide exchange factor for DnaK and may function as a thermosensor. Unfolded proteins bind initially to DnaJ; upon interaction with the DnaJ-bound protein, DnaK hydrolyzes its bound ATP, resulting in the formation of a stable complex. GrpE releases ADP from DnaK; ATP binding to DnaK triggers the release of the substrate protein, thus completing the reaction cycle. Several rounds of ATP-dependent interactions between DnaJ, DnaK and GrpE are required for fully efficient folding. This is Protein GrpE from Sulfurimonas denitrificans (strain ATCC 33889 / DSM 1251) (Thiomicrospira denitrificans (strain ATCC 33889 / DSM 1251)).